Consider the following 206-residue polypeptide: Protein Ta0236 (206 aa).

One can recognise an AMMECR1 domain in the interval 16–205 (DIGTKAVRLA…EKDPEGVVEK (190 aa)).

The polypeptide is Protein Ta0236 (Thermoplasma acidophilum (strain ATCC 25905 / DSM 1728 / JCM 9062 / NBRC 15155 / AMRC-C165)).